An 861-amino-acid polypeptide reads, in one-letter code: Replication factor C subunit 1 (861 aa).

The tract at residues 1-103 is disordered; the sequence is MVNISDFFGK…SSKSSDSASN (103 aa). Polar residues predominate over residues 16–28; the sequence is RSSTSRPTRQVGS. Phosphothreonine is present on threonine 38. At serine 40 the chain carries Phosphoserine. Threonine 63 carries the phosphothreonine modification. The BRCT domain occupies 153 to 243; that stretch reads GKPNCLLGLT…PAEGGDGEAA (91 aa). Residues threonine 299, cysteine 311, 353–361, and asparagine 456 contribute to the ATP site; that span reads GPPGIGKTT. The disordered stretch occupies residues 788–861; that stretch reads STIGGGGVGT…GGSKKRKTKA (74 aa). The span at 803–823 shows a compositional bias: acidic residues; that stretch reads DFEDVVDADDNPVPADDEETQ. 2 consecutive short sequence motifs (nuclear localization signal) follow at residues 830–834 and 855–860; these read KKDKL and KKRKTK. Residues 836–861 show a composition bias toward basic residues; it reads KQKAKPTKRKTATSKPGGSKKRKTKA.

It belongs to the activator 1 large subunit family. As to quaternary structure, replication factor C (RFC) is a heteropentamer of subunits RFC1, RFC2, RFC3, RFC4 and RFC5 and forms a complex with POL30/PCNA in the presence of ATP. Interacts with ECO1 and POL30/PCNA.

The protein resides in the nucleus. Functionally, component of the ATP-dependent clamp loader RFC complex for the POL30/PCNA homotrimer DNA clamp. During a clamp loading circle, the RFC:clamp complex binds to DNA and the recognition of the double-stranded/single-stranded junction stimulates ATP hydrolysis by RFC. The complex presumably provides bipartite ATP sites in which one subunit supplies a catalytic site for hydrolysis of ATP bound to the neighboring subunit. Dissociation of RFC from the clamp leaves the clamp encircling DNA. Replication factor C (RFC or activator 1) complex acts during elongation of primed DNA templates by DNA polymerase delta and epsilon. RFC has an essential but redundant activity in sister chromatid cohesion establishment. The sequence is that of Replication factor C subunit 1 (RFC1) from Saccharomyces cerevisiae (strain ATCC 204508 / S288c) (Baker's yeast).